Here is a 116-residue protein sequence, read N- to C-terminus: uncharacterized protein (116 aa).

Residues 1 to 21 form the signal peptide; that stretch reads MAPSTAMLIMGLLKLPRLRLA.

This is an uncharacterized protein from Saccharomyces cerevisiae (strain ATCC 204508 / S288c) (Baker's yeast).